Here is a 448-residue protein sequence, read N- to C-terminus: Nicotinate phosphoribosyltransferase pncB1 (448 aa).

The tract at residues Met1–Gly21 is disordered. A Phosphohistidine modification is found at His212. The segment at Arg353 to Ala372 is disordered.

The protein belongs to the NAPRTase family. Post-translationally, transiently phosphorylated on a His residue during the reaction cycle. Phosphorylation strongly increases the affinity for substrates and increases the rate of nicotinate D-ribonucleotide production. Dephosphorylation regenerates the low-affinity form of the enzyme, leading to product release.

The enzyme catalyses nicotinate + 5-phospho-alpha-D-ribose 1-diphosphate + ATP + H2O = nicotinate beta-D-ribonucleotide + ADP + phosphate + diphosphate. The protein operates within cofactor biosynthesis; NAD(+) biosynthesis; nicotinate D-ribonucleotide from nicotinate: step 1/1. Involved in the Preiss-Handler pathway, which is a recycling route that permits the salvage of free nicotinamide (NM) and nicotinic acid (Na) involved in the NAD biosynthesis. Catalyzes the synthesis of beta-nicotinate D-ribonucleotide from nicotinate and 5-phospho-D-ribose 1-phosphate at the expense of ATP. It is not able to use nicotinamide. PncB1 contributes to basal NAD level. The sequence is that of Nicotinate phosphoribosyltransferase pncB1 (pncB1) from Mycobacterium tuberculosis (strain CDC 1551 / Oshkosh).